A 270-amino-acid chain; its full sequence is High choriolytic enzyme 1 (270 aa).

A signal peptide spans 1–20; that stretch reads MNLAPSTCLLLLFLLDIAQA. Residues 21–70 constitute a propeptide, activation peptide; sequence LPVWDEEGHEEGHEEGDGDDFVDITTRILTSNNNTDQLLLEGDLVAPTNR. The N-linked (GlcNAc...) asparagine glycan is linked to Asn53. The Peptidase M12A domain occupies 71-270; that stretch reads NAMKCWSSSC…TRINVLYNCR (200 aa). 3 disulfides stabilise this stretch: Cys75–Cys80, Cys120–Cys269, and Cys141–Cys161. Residue His169 participates in Zn(2+) binding. Glu170 is a catalytic residue. Zn(2+) is bound by residues His173 and His179.

The cofactor is Zn(2+).

It localises to the zymogen granule. The enzyme catalyses Hydrolysis of the inner layer of fish egg envelope. Also hydrolysis of casein and small molecule substrates such as succinyl-Leu-Leu-Val-Tyr-|-7-(4-methyl)coumarylamide.. Functionally, participates in the breakdown of the egg envelope, which is derived from the egg extracellular matrix, at the time of hatching. Thus allowing the newly hatched fish to swim free. HCE binds tightly to the egg envelope while it exerts the choriolytic swelling action. This is High choriolytic enzyme 1 (hcea) from Oryzias latipes (Japanese rice fish).